The chain runs to 311 residues: HPr kinase/phosphorylase (311 aa).

Residues His-139 and Lys-160 contribute to the active site. Gly-154 to Ser-161 is a binding site for ATP. Residue Ser-161 participates in Mg(2+) binding. Residue Asp-178 is the Proton acceptor; for phosphorylation activity. Proton donor; for dephosphorylation activity of the active site. Residues Ile-202 to Asp-211 form an important for the catalytic mechanism of both phosphorylation and dephosphorylation region. A Mg(2+)-binding site is contributed by Glu-203. Arg-244 is a catalytic residue. The interval Pro-265 to Arg-270 is important for the catalytic mechanism of dephosphorylation.

This sequence belongs to the HPrK/P family. In terms of assembly, homohexamer. The cofactor is Mg(2+).

The enzyme catalyses [HPr protein]-L-serine + ATP = [HPr protein]-O-phospho-L-serine + ADP + H(+). It carries out the reaction [HPr protein]-O-phospho-L-serine + phosphate + H(+) = [HPr protein]-L-serine + diphosphate. Catalyzes the ATP- as well as the pyrophosphate-dependent phosphorylation of a specific serine residue in HPr, a phosphocarrier protein of the phosphoenolpyruvate-dependent sugar phosphotransferase system (PTS). HprK/P also catalyzes the pyrophosphate-producing, inorganic phosphate-dependent dephosphorylation (phosphorolysis) of seryl-phosphorylated HPr (P-Ser-HPr). The two antagonistic activities of HprK/P are regulated by several intracellular metabolites, which change their concentration in response to the absence or presence of rapidly metabolisable carbon sources (glucose, fructose, etc.) in the growth medium. Therefore, by controlling the phosphorylation state of HPr, HPrK/P is a sensor enzyme that plays a major role in the regulation of carbon metabolism and sugar transport: it mediates carbon catabolite repression (CCR), and regulates PTS-catalyzed carbohydrate uptake and inducer exclusion. This chain is HPr kinase/phosphorylase, found in Caldicellulosiruptor bescii (strain ATCC BAA-1888 / DSM 6725 / KCTC 15123 / Z-1320) (Anaerocellum thermophilum).